A 341-amino-acid chain; its full sequence is MLILTIETSCDETAAAVVRDGRTVLSSIVATQVKDHAVYGGVVPEIASRKHLESIPVVIDEALRTASVSLDAIEGVAVTQGPGLAGALLVGTAVAKAIAFARRLPIVGVNHIEGHLSAIFLEREVAFPFVALAVSGGHTHLYRVDGIGRYTTLGQTRDDAAGEAFDKVAKLLGLPYPGGVEIDRLAAEGDPASISFPRPLLHDGSFNFSFSGLKTAVLNHVRKNPVQEDGQQLRDLCASFQRAACDVLVTKTLLAAETEGIGRVVVAGGVACNSALRRDMAREAADRGIELAIPSPSLCSDNAAMLAVPGDFYLSRGISDGLSLDALVNWPLDTIRTRLES.

Fe cation is bound by residues His-111 and His-115. Substrate contacts are provided by residues 133 to 137, Asp-166, Gly-179, Asp-183, and Asn-273; that span reads AVSGG. A Fe cation-binding site is contributed by Asp-301.

It belongs to the KAE1 / TsaD family. It depends on Fe(2+) as a cofactor.

It is found in the cytoplasm. It catalyses the reaction L-threonylcarbamoyladenylate + adenosine(37) in tRNA = N(6)-L-threonylcarbamoyladenosine(37) in tRNA + AMP + H(+). Its function is as follows. Required for the formation of a threonylcarbamoyl group on adenosine at position 37 (t(6)A37) in tRNAs that read codons beginning with adenine. Is involved in the transfer of the threonylcarbamoyl moiety of threonylcarbamoyl-AMP (TC-AMP) to the N6 group of A37, together with TsaE and TsaB. TsaD likely plays a direct catalytic role in this reaction. The polypeptide is tRNA N6-adenosine threonylcarbamoyltransferase (Geobacter metallireducens (strain ATCC 53774 / DSM 7210 / GS-15)).